A 75-amino-acid chain; its full sequence is U6-lycotoxin-Ls1f (75 aa).

Positions 1–21 are cleaved as a signal peptide; sequence MKLLLFTALVLVVISLVEVEA. The propeptide occupies 22–25; that stretch reads ENER.

This sequence belongs to the neurotoxin 19 (CSTX) family. 06 (U6-Lctx) subfamily. Post-translationally, contains 4 disulfide bonds. In terms of tissue distribution, expressed by the venom gland.

The protein localises to the secreted. In Lycosa singoriensis (Wolf spider), this protein is U6-lycotoxin-Ls1f.